Consider the following 489-residue polypeptide: Betaine aldehyde dehydrogenase (489 aa).

Residues Thr26 and Asp93 each contribute to the K(+) site. 150-152 (GAW) serves as a coordination point for NAD(+). Lys162 (charge relay system) is an active-site residue. 176–179 (KPSE) provides a ligand contact to NAD(+). Val180 contacts K(+). 229-232 (GVET) contacts NAD(+). Residue Leu245 participates in K(+) binding. The Proton acceptor role is filled by Glu251. 3 residues coordinate NAD(+): Gly253, Cys285, and Glu386. Catalysis depends on Cys285, which acts as the Nucleophile. At Cys285 the chain carries Cysteine sulfenic acid (-SOH). K(+) is bound by residues Lys456 and Gly459. The Charge relay system role is filled by Glu463.

It belongs to the aldehyde dehydrogenase family. In terms of assembly, dimer of dimers. The cofactor is K(+).

It carries out the reaction betaine aldehyde + NAD(+) + H2O = glycine betaine + NADH + 2 H(+). It functions in the pathway amine and polyamine biosynthesis; betaine biosynthesis via choline pathway; betaine from betaine aldehyde: step 1/1. Its function is as follows. Involved in the biosynthesis of the osmoprotectant glycine betaine. Catalyzes the irreversible oxidation of betaine aldehyde to the corresponding acid. This is Betaine aldehyde dehydrogenase from Burkholderia orbicola (strain AU 1054).